The following is a 297-amino-acid chain: Phosphoribosylaminoimidazole-succinocarboxamide synthase (297 aa).

Belongs to the SAICAR synthetase family.

The enzyme catalyses 5-amino-1-(5-phospho-D-ribosyl)imidazole-4-carboxylate + L-aspartate + ATP = (2S)-2-[5-amino-1-(5-phospho-beta-D-ribosyl)imidazole-4-carboxamido]succinate + ADP + phosphate + 2 H(+). It functions in the pathway purine metabolism; IMP biosynthesis via de novo pathway; 5-amino-1-(5-phospho-D-ribosyl)imidazole-4-carboxamide from 5-amino-1-(5-phospho-D-ribosyl)imidazole-4-carboxylate: step 1/2. In Saccharopolyspora erythraea (strain ATCC 11635 / DSM 40517 / JCM 4748 / NBRC 13426 / NCIMB 8594 / NRRL 2338), this protein is Phosphoribosylaminoimidazole-succinocarboxamide synthase.